The primary structure comprises 973 residues: Protein HypA (973 aa).

This Clostridium perfringens (strain 13 / Type A) protein is Protein HypA (hypA).